The chain runs to 43 residues: Protein PsbN (43 aa).

Residues 7 to 27 (VTIFISGLLVSFTGYALYIAF) traverse the membrane as a helical segment.

It belongs to the PsbN family.

The protein localises to the plastid. It is found in the chloroplast thylakoid membrane. May play a role in photosystem I and II biogenesis. This chain is Protein PsbN, found in Dioscorea bulbifera (Air potato).